Consider the following 537-residue polypeptide: MRFLILVLAGSIGIYGVNLPKIPKLSDLVNPFQQFKLKDILSTLTALDTPDIAADSAGVSLPKHEYTDRLSSISDLNRSKRDLLFQGDIHLSFEHLSNIVREQLDHSRTKRTAFRNAMYPKTIWLPNVPFELHGSLSAKSRSSLVAAMAFWEKHTCVAFKKRTSEKVYLLMSGQEEGCWSTVGRDEAQGAQILNIGTGCEMFGITSHEIAHALGLFHEQSRYDRDNYVQIVKSRIAQTNFYDFAVVGKKNMETYGQKYDIGSVMHYRPTEFSLDGGNSIIAKDVNMQNTMGQFRGPSFIDVAKINRHYNCEKNCKNKITCLNGGYQHPKNCKICVCPPGYGGSDCKGIEASSPAKCTGVLVAGETQRKFTANIKPNKNAKGIRKCNYHIEAPPGKRIVIIVDSVIGNCVQGCYEEGVELKMYEDKTVTGARFCCKLQKPQTLISQGNTVPLMLVAGKAQAFVQLRYSTVDGPQNRSPKDGNATSIGVNPFLLEKYQDNSIDSEAIRKEYHIQSDNVNQEDFETLVRSEFIDENTADI.

An N-terminal signal peptide occupies residues 1–16 (MRFLILVLAGSIGIYG). Positions 17-111 (VNLPKIPKLS…EQLDHSRTKR (95 aa)) are excised as a propeptide. An N-linked (GlcNAc...) asparagine glycan is attached at N77. One can recognise a Peptidase M12A domain in the interval 116–311 (NAMYPKTIWL…AKINRHYNCE (196 aa)). 6 cysteine pairs are disulfide-bonded: C156–C310, C178–C199, C314–C334, C336–C345, C356–C385, and C412–C433. Position 207 (H207) interacts with Zn(2+). Residue E208 is part of the active site. Residues H211 and H217 each coordinate Zn(2+). The region spanning 306–346 (RHYNCEKNCKNKITCLNGGYQHPKNCKICVCPPGYGGSDCK) is the EGF-like domain. In terms of domain architecture, CUB spans 356–471 (CTGVLVAGET…VQLRYSTVDG (116 aa)). A glycan (N-linked (GlcNAc...) asparagine) is linked at N481.

It depends on Zn(2+) as a cofactor. In terms of tissue distribution, expressed in the hypodermis, rectum and to a lesser extent in pharyngeal muscles and intestine.

The protein resides in the secreted. Functionally, metalloprotease. The polypeptide is Zinc metalloproteinase nas-23 (nas-23) (Caenorhabditis elegans).